The chain runs to 83 residues: Mu-theraphotoxin-Hhn2j 1 (83 aa).

The first 21 residues, Met-1–Ala-21, serve as a signal peptide directing secretion. Residues Ser-22 to Arg-48 constitute a propeptide that is removed on maturation. 3 cysteine pairs are disulfide-bonded: Cys-50–Cys-65, Cys-57–Cys-70, and Cys-64–Cys-77. Leu-81 carries the post-translational modification Leucine amide.

This sequence belongs to the neurotoxin 10 (Hwtx-1) family. 15 (Hntx-3) subfamily. Monomer. Expressed by the venom gland.

The protein resides in the secreted. Lethal neurotoxin. Selectively blocks tetrodotoxin-sensitive voltage-gated sodium channels (Nav). Does not affect tetrodotoxin-resistant voltage-gated sodium channels or calcium channels. The protein is Mu-theraphotoxin-Hhn2j 1 of Cyriopagopus hainanus (Chinese bird spider).